The primary structure comprises 212 residues: uncharacterized protein (212 aa).

Residues Gly-53, Glu-74, and Asp-97 each contribute to the S-adenosyl-L-methionine site.

It belongs to the methyltransferase superfamily. YrrT family.

Could be a S-adenosyl-L-methionine-dependent methyltransferase. This is an uncharacterized protein from Bacillus cereus (strain 03BB102).